A 416-amino-acid chain; its full sequence is Glutamyl-tRNA reductase (416 aa).

Substrate is bound by residues T49–R52, S105, E110–Q112, and Q116. The Nucleophile role is filled by C50. G185–I190 contacts NADP(+).

This sequence belongs to the glutamyl-tRNA reductase family. Homodimer.

The catalysed reaction is (S)-4-amino-5-oxopentanoate + tRNA(Glu) + NADP(+) = L-glutamyl-tRNA(Glu) + NADPH + H(+). Its pathway is porphyrin-containing compound metabolism; protoporphyrin-IX biosynthesis; 5-aminolevulinate from L-glutamyl-tRNA(Glu): step 1/2. Its function is as follows. Catalyzes the NADPH-dependent reduction of glutamyl-tRNA(Glu) to glutamate 1-semialdehyde (GSA). The chain is Glutamyl-tRNA reductase from Shewanella piezotolerans (strain WP3 / JCM 13877).